Consider the following 203-residue polypeptide: Small ribosomal subunit protein uS4 (203 aa).

The 64-residue stretch at 93-156 (RRLDNVVYRL…LKVPAILEAV (64 aa)) folds into the S4 RNA-binding domain.

The protein belongs to the universal ribosomal protein uS4 family. As to quaternary structure, part of the 30S ribosomal subunit. Contacts protein S5. The interaction surface between S4 and S5 is involved in control of translational fidelity.

Functionally, one of the primary rRNA binding proteins, it binds directly to 16S rRNA where it nucleates assembly of the body of the 30S subunit. In terms of biological role, with S5 and S12 plays an important role in translational accuracy. The sequence is that of Small ribosomal subunit protein uS4 from Streptococcus sanguinis (strain SK36).